The following is a 438-amino-acid chain: MIINRLFIIIVLFFVNVNSKIISESTLNSCQGGTIQIAESIPLGLDISTNLSTHDAWMDLITNAQESIDLGFFYFTLLGGSDLDPVYGGQLGIDIFNAIVEAHSRGINVRIVQNEPSESFPDTETQTLAKLGIQVRSIDWVSLVGSGVLHTKLIIIDESSAYVGSANADWSSLAQVKELGIVLKNCPTMVADTEIAFQQYWNAADFTSLPINDWGSNYQALFNNTNMASLSLNNNNNNNNKNKNNDNDGSGTNQMYEMFLAVSPPQFQSTYRTGDIDALMDAINNADQSICITVMDYTPTTLYNDPNTYWPLIDNALRAAAFNRNVQVRMLISHWNYTSPIIPQWLHSLNQVDNIQVRWFVVPDFSTNPQIPYTRVNHAKFMVTEKQSYVGTSNWSQDYFTVTGGLSYNVFNNDFTNQLQSIFNRDWNSPYTQPIQNF.

Residues 1–19 (MIINRLFIIIVLFFVNVNS) form the signal peptide. N-linked (GlcNAc...) asparagine glycosylation is present at N50. The PLD phosphodiesterase 1 domain occupies 145-172 (GSGVLHTKLIIIDESSAYVGSANADWSS). Residues H150, K152, and D157 contribute to the active site. N-linked (GlcNAc...) asparagine glycans are attached at residues N223, N336, and N394. A PLD phosphodiesterase 2 domain is found at 373-399 (YTRVNHAKFMVTEKQSYVGTSNWSQDY).

The protein belongs to the phospholipase D family.

It catalyses the reaction a 1,2-diacyl-sn-glycero-3-phosphocholine + H2O = a 1,2-diacyl-sn-glycero-3-phosphate + choline + H(+). Its activity is regulated as follows. Inhibited by butan-1-ol. Hydrolyzes membrane phospholipids, such as PtdCho (phosphatidylcholine), producing the free headgroup and PtdOH (phosphatidic acid; signaling molecule on its own). This is Phospholipase D Y (pldY) from Dictyostelium discoideum (Social amoeba).